The sequence spans 380 residues: Alkaline protease (380 aa).

The N-terminal stretch at methionine 1–alanine 27 is a signal peptide. A propeptide spanning residues alanine 28–alanine 112 is cleaved from the precursor. An Inhibitor I9 domain is found at lysine 34–methionine 111. A Ca(2+)-binding site is contributed by glutamine 113. One can recognise a Peptidase S8 domain in the interval proline 116 to threonine 379. The active-site Charge relay system is aspartate 143. Aspartate 151 contacts Ca(2+). The Charge relay system role is filled by histidine 173. 7 residues coordinate Ca(2+): leucine 184, asparagine 186, isoleucine 188, valine 190, alanine 274, tyrosine 276, and alanine 279. Serine 326 functions as the Charge relay system in the catalytic mechanism.

The protein belongs to the peptidase S8 family. Requires Ca(2+) as cofactor.

It is found in the secreted. This chain is Alkaline protease, found in Alkalihalobacillus alcalophilus (Bacillus alcalophilus).